A 533-amino-acid chain; its full sequence is MDGKSKMQAEKHLTGTLVLSVFTAVLGFFQYGYSLGVINAPQKVIEAHYGRMLGAIPMVRHATNTSRDNATITVTIPGTEAWGSSEGTLAPSAGFEDPTVSPHILTMYWSLSVSMFAVGGMVSSFTVGWIGDRLGRVKAMLVVNVLSIAGNLLMGLAKMGPSHILIIAGRAITGLYCGLSSGLVPMYVSEVSPTALRGALGTLHQLAIVTGILISQVLGLDFLLGNDELWPLLLGLSGVAALLQFFLLLLCPESPRYLYIKLGKVEEAKKSLKRLRGNCDPMKEIAEMEKEKQEAASEKRVSIGQLFSSSKYRQAVIVALMVQISQQFSGINAIFYYSTNIFQRAGVGQPVYATIGVGVVNTVFTVISVFLVEKAGRRSLFLAGLMGMLISAVAMTVGLVLLSQFAWMSYVSMVAIFLFVIFFEVGPGPIPWFIVAELFSQGPRPAAIAVAGFCNWACNFIVGMCFQYIADLCGPYVFVVFAVLLLVFFLFAYLKVPETKGKSFEEIAAAFRRKKLPAKSMTELEDLRGGEEA.

Topologically, residues 1 to 17 (MDGKSKMQAEKHLTGTL) are cytoplasmic. A helical transmembrane segment spans residues 18–38 (VLSVFTAVLGFFQYGYSLGVI). The Extracellular portion of the chain corresponds to 39–110 (NAPQKVIEAH…SPHILTMYWS (72 aa)). 2 N-linked (GlcNAc...) asparagine glycosylation sites follow: asparagine 64 and asparagine 69. Residues 111-131 (LSVSMFAVGGMVSSFTVGWIG) traverse the membrane as a helical segment. The Cytoplasmic segment spans residues 132–136 (DRLGR). The helical transmembrane segment at 137 to 157 (VKAMLVVNVLSIAGNLLMGLA) threads the bilayer. The Extracellular segment spans residues 158–163 (KMGPSH). The chain crosses the membrane as a helical span at residues 164–184 (ILIIAGRAITGLYCGLSSGLV). The Cytoplasmic segment spans residues 185 to 199 (PMYVSEVSPTALRGA). Residues 200–220 (LGTLHQLAIVTGILISQVLGL) form a helical membrane-spanning segment. Residue glutamine 205 coordinates D-glucose. At 221-229 (DFLLGNDEL) the chain is on the extracellular side. A helical transmembrane segment spans residues 230 to 250 (WPLLLGLSGVAALLQFFLLLL). At 251 to 315 (CPESPRYLYI…LFSSSKYRQA (65 aa)) the chain is on the cytoplasmic side. A helical transmembrane segment spans residues 316 to 336 (VIVALMVQISQQFSGINAIFY). D-glucose contacts are provided by residues 326-327 (QQ) and asparagine 332. Residues 337-350 (YSTNIFQRAGVGQP) lie on the Extracellular side of the membrane. The chain crosses the membrane as a helical span at residues 351 to 371 (VYATIGVGVVNTVFTVISVFL). Asparagine 361 lines the D-glucose pocket. The Cytoplasmic portion of the chain corresponds to 372 to 379 (VEKAGRRS). The helical transmembrane segment at 380–400 (LFLAGLMGMLISAVAMTVGLV) threads the bilayer. The Extracellular segment spans residues 401–413 (LLSQFAWMSYVSM). The helical transmembrane segment at 414-434 (VAIFLFVIFFEVGPGPIPWFI) threads the bilayer. Residues glutamate 424 and tryptophan 432 each coordinate D-glucose. Residues 435–445 (VAELFSQGPRP) are Cytoplasmic-facing. Residues 446-466 (AAIAVAGFCNWACNFIVGMCF) traverse the membrane as a helical segment. The Extracellular portion of the chain corresponds to 467-471 (QYIAD). The helical transmembrane segment at 472–492 (LCGPYVFVVFAVLLLVFFLFA) threads the bilayer. Residues 493–533 (YLKVPETKGKSFEEIAAAFRRKKLPAKSMTELEDLRGGEEA) are Cytoplasmic-facing.

This sequence belongs to the major facilitator superfamily. Sugar transporter (TC 2.A.1.1) family. Glucose transporter subfamily.

The protein localises to the cell membrane. It catalyses the reaction D-glucose(out) = D-glucose(in). It carries out the reaction D-fructose(out) = D-fructose(in). The enzyme catalyses L-dehydroascorbate(out) = L-dehydroascorbate(in). The catalysed reaction is D-galactose(in) = D-galactose(out). With respect to regulation, D-glucose and maltose competitively inhibit fructose transport. D-glucose, D-fructose and maltose inhibit deoxyglucose transport. In terms of biological role, facilitative hexose transporter that mediates the transport of glucose, fructose and galactose. Likely mediates the bidirectional transfer of glucose across the plasma membrane of hepatocytes and is responsible for uptake of glucose by the beta cells. This Gallus gallus (Chicken) protein is Solute carrier family 2, facilitated glucose transporter member 2.